The sequence spans 146 residues: Stress enhanced protein 1, chloroplastic (146 aa).

A chloroplast-targeting transit peptide spans methionine 1–arginine 73. Helical transmembrane passes span leucine 84 to isoleucine 104 and leucine 120 to phenylalanine 140.

This sequence belongs to the ELIP/psbS family.

It is found in the plastid. Its subcellular location is the chloroplast thylakoid membrane. Its function is as follows. May be involved in non-photochemical quenching, a process that maintains the balance between dissipation and utilization of light energy to minimize generation of oxidizing molecules, thereby protecting the plant against photo-oxidative damage. May play a photoprotective role in the thylakoid membrane in response to light stress. The chain is Stress enhanced protein 1, chloroplastic from Arabidopsis thaliana (Mouse-ear cress).